The primary structure comprises 285 residues: uncharacterized protein (285 aa).

Serine 168 lines the substrate pocket. The Proton acceptor role is filled by tyrosine 181.

The protein belongs to the short-chain dehydrogenases/reductases (SDR) family.

This is an uncharacterized protein from Haemophilus influenzae (strain ATCC 51907 / DSM 11121 / KW20 / Rd).